The chain runs to 498 residues: ATP synthase subunit beta, chloroplastic (498 aa).

Residue 172 to 179 (GGAGVGKT) participates in ATP binding.

Belongs to the ATPase alpha/beta chains family. In terms of assembly, F-type ATPases have 2 components, CF(1) - the catalytic core - and CF(0) - the membrane proton channel. CF(1) has five subunits: alpha(3), beta(3), gamma(1), delta(1), epsilon(1). CF(0) has four main subunits: a(1), b(1), b'(1) and c(9-12).

The protein resides in the plastid. Its subcellular location is the chloroplast thylakoid membrane. It catalyses the reaction ATP + H2O + 4 H(+)(in) = ADP + phosphate + 5 H(+)(out). Its function is as follows. Produces ATP from ADP in the presence of a proton gradient across the membrane. The catalytic sites are hosted primarily by the beta subunits. This chain is ATP synthase subunit beta, chloroplastic, found in Buxus microphylla (Littleleaf boxwood).